The primary structure comprises 378 residues: Erythronate-4-phosphate dehydrogenase (378 aa).

Substrate is bound by residues Ser-45 and Thr-66. Positions 146 and 175 each coordinate NAD(+). Arg-208 is an active-site residue. Asp-232 is an NAD(+) binding site. The active site involves Glu-237. His-254 serves as the catalytic Proton donor. Gly-257 is a binding site for NAD(+). Substrate is bound at residue Tyr-258.

Belongs to the D-isomer specific 2-hydroxyacid dehydrogenase family. PdxB subfamily. As to quaternary structure, homodimer.

The protein localises to the cytoplasm. It catalyses the reaction 4-phospho-D-erythronate + NAD(+) = (R)-3-hydroxy-2-oxo-4-phosphooxybutanoate + NADH + H(+). The protein operates within cofactor biosynthesis; pyridoxine 5'-phosphate biosynthesis; pyridoxine 5'-phosphate from D-erythrose 4-phosphate: step 2/5. Its function is as follows. Catalyzes the oxidation of erythronate-4-phosphate to 3-hydroxy-2-oxo-4-phosphonooxybutanoate. This Shigella boydii serotype 4 (strain Sb227) protein is Erythronate-4-phosphate dehydrogenase.